Reading from the N-terminus, the 430-residue chain is Alpha-1,6-mannosyl-glycoprotein 2-beta-N-acetylglucosaminyltransferase (430 aa).

Over 1-12 the chain is Cytoplasmic; the sequence is MANLWKKQRLRD. A helical; Signal-anchor for type II membrane protein transmembrane segment spans residues 13–35; that stretch reads TGLCRLGILFAVTLSIVLMLVSV. At 36 to 430 the chain is on the lumenal side; that stretch reads PRTALNGSSI…YRYSSSSASP (395 aa). N-linked (GlcNAc...) asparagine glycans are attached at residues Asn41 and Asn61. Substrate-binding positions include 104-108 and Asp135; that span reads YVHNR. Cys177 and Cys188 are joined by a disulfide. 205–209 is a substrate binding site; that stretch reads SLKHH. Residue Asp237 coordinates Mn(2+). The cysteines at positions 259 and 262 are disulfide-linked. Asn295 carries N-linked (GlcNAc...) asparagine glycosylation. A disulfide bridge links Cys310 with Cys414. Mn(2+) is bound at residue His345.

The protein belongs to the glycosyltransferase 16 (GT16) protein family. Mn(2+) is required as a cofactor.

It localises to the golgi apparatus membrane. It carries out the reaction an N(4)-{beta-D-GlcNAc-(1-&gt;2)-alpha-D-Man-(1-&gt;3)-[alpha-D-Man-(1-&gt;6)]-beta-D-Man-(1-&gt;4)-beta-D-GlcNAc-(1-&gt;4)-beta-D-GlcNAc}-L-asparaginyl-[protein] + UDP-N-acetyl-alpha-D-glucosamine = N(4)-{beta-D-GlcNAc-(1-&gt;2)-alpha-D-Man-(1-&gt;3)-[beta-D-GlcNAc-(1-&gt;2)-alpha-D-Man-(1-&gt;6)]-beta-D-Man-(1-&gt;4)-beta-D-GlcNAc-(1-&gt;4)-beta-D-GlcNAc}-L-asparaginyl-[protein] + UDP + H(+). It functions in the pathway protein modification; protein glycosylation. Functionally, catalyzes an essential step in the conversion of oligo-mannose and hybrid to complex N-glycans. In Arabidopsis thaliana (Mouse-ear cress), this protein is Alpha-1,6-mannosyl-glycoprotein 2-beta-N-acetylglucosaminyltransferase.